Reading from the N-terminus, the 357-residue chain is Histidinol-phosphate aminotransferase (357 aa).

Residue Lys-212 is modified to N6-(pyridoxal phosphate)lysine.

This sequence belongs to the class-II pyridoxal-phosphate-dependent aminotransferase family. Histidinol-phosphate aminotransferase subfamily. In terms of assembly, homodimer. Pyridoxal 5'-phosphate serves as cofactor.

It carries out the reaction L-histidinol phosphate + 2-oxoglutarate = 3-(imidazol-4-yl)-2-oxopropyl phosphate + L-glutamate. It participates in amino-acid biosynthesis; L-histidine biosynthesis; L-histidine from 5-phospho-alpha-D-ribose 1-diphosphate: step 7/9. The chain is Histidinol-phosphate aminotransferase from Pectobacterium atrosepticum (strain SCRI 1043 / ATCC BAA-672) (Erwinia carotovora subsp. atroseptica).